A 409-amino-acid chain; its full sequence is Coagulation factor IX (409 aa).

Positions 1, 2, 7, 8, 16, 18, 21, 22, 27, 28, and 31 each coordinate Ca(2+). Residues 1–47 (YNSGKLEESFVRGNLERECIEEKCSFEEAREVFENTEKTNEFWKQYV) form the Gla domain. 12 positions are modified to 4-carboxyglutamate: glutamate 7, glutamate 8, glutamate 16, glutamate 18, glutamate 21, glutamate 22, glutamate 27, glutamate 28, glutamate 31, glutamate 34, glutamate 37, and glutamate 41. Mg(2+) is bound at residue glutamate 16. Cysteine 19 and cysteine 24 are joined by a disulfide. Glutamate 21 serves as a coordination point for Mg(2+). Mg(2+) is bound at residue glutamate 27. Residue glutamate 31 coordinates Mg(2+). Ca(2+) is bound by residues glutamate 37, glutamate 41, aspartate 48, glycine 49, and glutamine 51. Residues glutamate 37 and glutamate 41 each contribute to the Mg(2+) site. Positions 48 to 84 (DGDQCEPNPCLNGGLCKDDINSYECWCQVGFEGKNCE) constitute an EGF-like 1; calcium-binding domain. 10 cysteine pairs are disulfide-bonded: cysteine 52–cysteine 63, cysteine 57–cysteine 72, cysteine 74–cysteine 83, cysteine 89–cysteine 100, cysteine 96–cysteine 110, cysteine 112–cysteine 125, cysteine 133–cysteine 291, cysteine 208–cysteine 224, cysteine 338–cysteine 352, and cysteine 363–cysteine 391. Positions 65 and 66 each coordinate Ca(2+). Aspartate 65 is subject to (3R)-3-hydroxyaspartate. At serine 69 the chain carries Phosphoserine. The EGF-like 2 domain occupies 85 to 126 (LDATCNIKNGRCKQFCKTGADSKVLCSCTTGYRLAPDQKSCK). Residues 148-182 (AEIIFSNMDYENSTEVEPILDSLTESNQSSDDFIR) constitute a propeptide, activation peptide. A Sulfotyrosine modification is found at tyrosine 157. Phosphoserine is present on serine 160. Position 161 is a phosphothreonine; alternate (threonine 161). Threonine 161 is a glycosylation site (O-linked (GalNAc...) threonine; alternate). Residue threonine 171 is glycosylated (O-linked (GalNAc...) threonine). A glycan (N-linked (GlcNAc...) asparagine) is linked at asparagine 174. The Peptidase S1 domain occupies 183 to 409 (IVGGENAKPG…YTKVSRYVNW (227 aa)). Residue histidine 223 is the Charge relay system of the active site. Ca(2+)-binding residues include glutamate 237, asparagine 239, glutamate 242, glutamate 244, and glutamate 247. An N-linked (GlcNAc...) asparagine glycan is attached at asparagine 262. The active-site Charge relay system is the aspartate 271. The active-site Charge relay system is serine 367.

Belongs to the peptidase S1 family. As to quaternary structure, heterodimer of a light chain and a heavy chain; disulfide-linked. Interacts (inactive and activated) with F11 (activated) in calcium-dependent manner. Interacts with SERPINC1. Post-translationally, activated by factor XIa, which excises the activation peptide. The propeptide can also be removed by snake venom protease. Activated by coagulation factor VIIa-tissue factor (F7-F3) complex in calcium-dependent manner. In terms of processing, the iron and 2-oxoglutarate dependent 3-hydroxylation of aspartate and asparagine is (R) stereospecific within EGF domains.

The protein resides in the secreted. The catalysed reaction is Selective cleavage of Arg-|-Ile bond in factor X to form factor Xa.. Its function is as follows. Factor IX is a vitamin K-dependent plasma protein that participates in the intrinsic pathway of blood coagulation by converting factor X to its active form in the presence of Ca(2+) ions, phospholipids, and factor VIIIa. The protein is Coagulation factor IX (F9) of Sus scrofa (Pig).